The sequence spans 78 residues: Small ribosomal subunit protein bS18 (78 aa).

The protein belongs to the bacterial ribosomal protein bS18 family. As to quaternary structure, part of the 30S ribosomal subunit. Forms a tight heterodimer with protein bS6.

Functionally, binds as a heterodimer with protein bS6 to the central domain of the 16S rRNA, where it helps stabilize the platform of the 30S subunit. This chain is Small ribosomal subunit protein bS18, found in Pediococcus pentosaceus (strain ATCC 25745 / CCUG 21536 / LMG 10740 / 183-1w).